Reading from the N-terminus, the 430-residue chain is MSKTHLTEQKFSDFALHPQVIEALESKGFHYCTPIQALALPLTLSGRDVAGQAQTGTGKTLAFLASTFHYLLSHPANAERQTNQPRALIMAPTRELAVQIHSDAEALSHLTGLKLGLAYGGDGYDKQLKVLENGVDILVGTTGRLIDYAKQNHINLGAIQVVVLDEADRMYDLGFIKDIRWLFRRMPATSQRLNMLFSATLSYRVRELAFEQMNNAEYVEVEPEQKTGHRITEELFYPSNEEKMRLLQTLLEEEWPDRCIIFANTKHRCEDVWGHLAADGHRVGLLTGDVAQKKRLRILEEFTQGSIDILVATDVAARGLHIPSVTHVFNYDLPDDCEDYVHRIGRTGRAGQSGFSISLACEEYALNLPAIETYIGHGIPLSKYNSDALMNDLPAPKRLTRPPRSNNGPRRHNSAPRRSGAPRNNRKRAD.

The short motif at 9 to 37 (QKFSDFALHPQVIEALESKGFHYCTPIQA) is the Q motif element. In terms of domain architecture, Helicase ATP-binding spans 40–219 (LPLTLSGRDV…FEQMNNAEYV (180 aa)). ATP is bound at residue 53 to 60 (AQTGTGKT). Positions 165-168 (DEAD) match the DEAD box motif. The region spanning 245–390 (RLLQTLLEEE…LSKYNSDALM (146 aa)) is the Helicase C-terminal domain. The tract at residues 392 to 430 (DLPAPKRLTRPPRSNNGPRRHNSAPRRSGAPRNNRKRAD) is disordered.

It belongs to the DEAD box helicase family. RhlB subfamily. As to quaternary structure, component of the RNA degradosome, which is a multiprotein complex involved in RNA processing and mRNA degradation.

It is found in the cytoplasm. It catalyses the reaction ATP + H2O = ADP + phosphate + H(+). DEAD-box RNA helicase involved in RNA degradation. Has RNA-dependent ATPase activity and unwinds double-stranded RNA. The sequence is that of ATP-dependent RNA helicase RhlB from Pectobacterium atrosepticum (strain SCRI 1043 / ATCC BAA-672) (Erwinia carotovora subsp. atroseptica).